The primary structure comprises 172 residues: Ribosome maturation factor RimM (172 aa).

The PRC barrel domain maps to 96–168 (DGEFYYHEII…RIEVELMEGL (73 aa)).

The protein belongs to the RimM family. Binds ribosomal protein uS19.

The protein resides in the cytoplasm. Functionally, an accessory protein needed during the final step in the assembly of 30S ribosomal subunit, possibly for assembly of the head region. Essential for efficient processing of 16S rRNA. May be needed both before and after RbfA during the maturation of 16S rRNA. It has affinity for free ribosomal 30S subunits but not for 70S ribosomes. The sequence is that of Ribosome maturation factor RimM from Streptococcus thermophilus (strain CNRZ 1066).